We begin with the raw amino-acid sequence, 199 residues long: Recombination protein RecR (199 aa).

Residues 58–73 (CSVCFTLSDTPVCAIC) form a C4-type zinc finger. The Toprim domain occupies 81 to 176 (SLLCVVEGPT…TVTRIASGMP (96 aa)).

Belongs to the RecR family.

Its function is as follows. May play a role in DNA repair. It seems to be involved in an RecBC-independent recombinational process of DNA repair. It may act with RecF and RecO. The protein is Recombination protein RecR of Desulfosudis oleivorans (strain DSM 6200 / JCM 39069 / Hxd3) (Desulfococcus oleovorans).